Consider the following 253-residue polypeptide: 3-deoxy-manno-octulosonate cytidylyltransferase (253 aa).

The protein belongs to the KdsB family.

The protein resides in the cytoplasm. It carries out the reaction 3-deoxy-alpha-D-manno-oct-2-ulosonate + CTP = CMP-3-deoxy-beta-D-manno-octulosonate + diphosphate. It functions in the pathway nucleotide-sugar biosynthesis; CMP-3-deoxy-D-manno-octulosonate biosynthesis; CMP-3-deoxy-D-manno-octulosonate from 3-deoxy-D-manno-octulosonate and CTP: step 1/1. The protein operates within bacterial outer membrane biogenesis; lipopolysaccharide biosynthesis. Functionally, activates KDO (a required 8-carbon sugar) for incorporation into bacterial lipopolysaccharide in Gram-negative bacteria. The polypeptide is 3-deoxy-manno-octulosonate cytidylyltransferase (Acinetobacter baumannii (strain SDF)).